Here is a 126-residue protein sequence, read N- to C-terminus: Small ribosomal subunit protein uS12 (126 aa).

Positions 1–28 (MPTIQQLIRSERSKVQKKTKSPALKQCP) are disordered. Asp-89 carries the 3-methylthioaspartic acid modification. Positions 104–126 (ATGVKDRKQGRSKYGTKREKAKK) are disordered. A compositionally biased stretch (basic residues) spans 113 to 126 (GRSKYGTKREKAKK).

The protein belongs to the universal ribosomal protein uS12 family. As to quaternary structure, part of the 30S ribosomal subunit. Contacts proteins S8 and S17. May interact with IF1 in the 30S initiation complex.

In terms of biological role, with S4 and S5 plays an important role in translational accuracy. Its function is as follows. Interacts with and stabilizes bases of the 16S rRNA that are involved in tRNA selection in the A site and with the mRNA backbone. Located at the interface of the 30S and 50S subunits, it traverses the body of the 30S subunit contacting proteins on the other side and probably holding the rRNA structure together. The combined cluster of proteins S8, S12 and S17 appears to hold together the shoulder and platform of the 30S subunit. The chain is Small ribosomal subunit protein uS12 from Synechocystis sp. (strain ATCC 27184 / PCC 6803 / Kazusa).